The following is a 278-amino-acid chain: Cation-dependent mannose-6-phosphate receptor (278 aa).

The first 21 residues, 1-21 (MFPLSGCWRTELLLLLLLAVA), serve as a signal peptide directing secretion. Topologically, residues 22 to 188 (VRESWQIEEK…ACSPEVSHLS (167 aa)) are lumenal. The MRH domain maps to 31–182 (KSCDLVGEKD…EMDSSLACSP (152 aa)). Cysteines 33 and 79 form a disulfide. 5 N-linked (GlcNAc...) asparagine glycosylation sites follow: Asn58, Asn84, Asn95, Asn108, and Asn114. Cystine bridges form between Cys133-Cys168 and Cys146-Cys180. The helical transmembrane segment at 189-209 (VGSILLVIFASLVAVYIIGGF) threads the bilayer. Residues 210–278 (LYQRLVVGAK…EERDDHLLPM (69 aa)) lie on the Cytoplasmic side of the membrane. The interval 256–278 (YRGVGDDQLGEESEERDDHLLPM) is disordered. Ser268 is subject to Phosphoserine.

As to quaternary structure, homodimer. Binds GGA1, GGA2 and GGA3.

It is found in the lysosome membrane. In terms of biological role, transport of phosphorylated lysosomal enzymes from the Golgi complex and the cell surface to lysosomes. Lysosomal enzymes bearing phosphomannosyl residues bind specifically to mannose-6-phosphate receptors in the Golgi apparatus and the resulting receptor-ligand complex is transported to an acidic prelyosomal compartment where the low pH mediates the dissociation of the complex. This is Cation-dependent mannose-6-phosphate receptor (M6pr) from Rattus norvegicus (Rat).